Reading from the N-terminus, the 698-residue chain is Polyribonucleotide nucleotidyltransferase (698 aa).

Mg(2+)-binding residues include Asp-490 and Asp-496. Residues 557–616 (PKVVTMTIKPDKIRDVIGPGGKKINEIIDETGVKLDIEQDGTIFIGAVDQAMINRAREII) enclose the KH domain. One can recognise an S1 motif domain in the interval 626–694 (GQTYQATVKR…KQGRVNASHR (69 aa)).

It belongs to the polyribonucleotide nucleotidyltransferase family. Mg(2+) serves as cofactor.

It is found in the cytoplasm. The catalysed reaction is RNA(n+1) + phosphate = RNA(n) + a ribonucleoside 5'-diphosphate. In terms of biological role, involved in mRNA degradation. Catalyzes the phosphorolysis of single-stranded polyribonucleotides processively in the 3'- to 5'-direction. This chain is Polyribonucleotide nucleotidyltransferase, found in Staphylococcus aureus (strain MRSA252).